A 388-amino-acid chain; its full sequence is Galactokinase (388 aa).

Residue Glu32–Asp35 coordinates substrate. ATP-binding positions include Ser66 and Gly123–Ser129. Residues Ser129 and Glu161 each coordinate Mg(2+). Asp173 functions as the Proton acceptor in the catalytic mechanism. Residue Tyr223 coordinates substrate.

The protein belongs to the GHMP kinase family. GalK subfamily.

The protein localises to the cytoplasm. It catalyses the reaction alpha-D-galactose + ATP = alpha-D-galactose 1-phosphate + ADP + H(+). The protein operates within carbohydrate metabolism; galactose metabolism. Its function is as follows. Catalyzes the transfer of the gamma-phosphate of ATP to D-galactose to form alpha-D-galactose-1-phosphate (Gal-1-P). The protein is Galactokinase of Staphylococcus carnosus (strain TM300).